A 247-amino-acid polypeptide reads, in one-letter code: E3 ubiquitin-protein ligase RNF182 (247 aa).

An RING-type zinc finger spans residues 20 to 68 (CKICYNRYNLKQRKPKVLECCHRVCAKCLYKIIDFGDSPQGVIVCPFCR). A run of 2 helical transmembrane segments spans residues 184-204 (VLVW…IYLL) and 211-231 (LGVV…VYGF).

Interacts with ATP6V0C.

The protein resides in the membrane. The protein localises to the cytoplasm. The catalysed reaction is S-ubiquitinyl-[E2 ubiquitin-conjugating enzyme]-L-cysteine + [acceptor protein]-L-lysine = [E2 ubiquitin-conjugating enzyme]-L-cysteine + N(6)-ubiquitinyl-[acceptor protein]-L-lysine.. It functions in the pathway protein modification; protein ubiquitination. Functionally, E3 ubiquitin-protein ligase that mediates the ubiquitination of ATP6V0C and targets it to degradation via the ubiquitin-proteasome pathway. Also plays a role in the inhibition of TLR-triggered innate immune response by mediating 'Lys'-48-linked ubiquitination and subsequent degradation of NF-kappa-B component RELA. This Ailuropoda melanoleuca (Giant panda) protein is E3 ubiquitin-protein ligase RNF182 (RNF182).